Reading from the N-terminus, the 859-residue chain is Envelope glycoprotein gp160 (859 aa).

The first 23 residues, Met1–Lys23, serve as a signal peptide directing secretion. Over Gln24–Tyr678 the chain is Extracellular. Asn37 carries an N-linked (GlcNAc...) asparagine; by host glycan. The cysteines at positions 44 and 57 are disulfide-linked. Asn70, Asn112, Asn122, Asn142, Asn150, Asn165, Asn191, Asn206, Asn238, Asn241, Asn248, Asn272, Asn278, Asn289, Asn300, Asn310, Asn343, Asn367, Asn400, Asn410, Asn413, Asn450, Asn464, and Asn468 each carry an N-linked (GlcNAc...) asparagine; by host glycan. Cystine bridges form between Cys101-Cys214, Cys108-Cys205, Cys113-Cys164, Cys227-Cys257, and Cys237-Cys249. The tract at residues Cys113–Gln163 is V1. Positions Cys164–Cys205 are V2. A V3 region spans residues Cys305–Trp337. Cysteines 305 and 338 form a disulfide. Intrachain disulfides connect Cys392/Cys449 and Cys399/Cys422. Positions Cys399–Cys422 are V4. Residues Ser465 to Val471 are V5. The interval Gly514–Thr534 is fusion peptide. The segment at Leu577–Gln593 is immunosuppression. Asn613, Asn622, and Asn638 each carry an N-linked (GlcNAc...) asparagine; by host glycan. Positions Gln626–Gln647 form a coiled coil. The segment at Lys659–His680 is MPER; binding to GalCer. The helical transmembrane segment at Ile679–Val699 threads the bilayer. Residues Gln700–Leu859 are Cytoplasmic-facing. Positions Tyr709 to Val712 match the YXXV motif; contains endocytosis signal motif. Residues Ser715–Asp744 are disordered. Cys775 is lipidated: S-palmitoyl cysteine; by host. The Di-leucine internalization motif motif lies at Leu858–Leu859.

As to quaternary structure, the mature envelope protein (Env) consists of a homotrimer of non-covalently associated gp120-gp41 heterodimers. The resulting complex protrudes from the virus surface as a spike. There seems to be as few as 10 spikes on the average virion. Interacts with human CD4, CCR5 and CXCR4, to form a P4HB/PDI-CD4-CXCR4-gp120 complex. Gp120 also interacts with the C-type lectins CD209/DC-SIGN and CLEC4M/DC-SIGNR (collectively referred to as DC-SIGN(R)). Gp120 and gp41 interact with GalCer. The mature envelope protein (Env) consists of a homotrimer of non-covalently associated gp120-gp41 heterodimers. The resulting complex protrudes from the virus surface as a spike. There seems to be as few as 10 spikes on the average virion. Specific enzymatic cleavages in vivo yield mature proteins. Envelope glycoproteins are synthesized as an inactive precursor that is heavily N-glycosylated and processed likely by host cell furin in the Golgi to yield the mature SU and TM proteins. The cleavage site between SU and TM requires the minimal sequence [KR]-X-[KR]-R. Post-translationally, palmitoylation of the transmembrane protein and of Env polyprotein (prior to its proteolytic cleavage) is essential for their association with host cell membrane lipid rafts. Palmitoylation is therefore required for envelope trafficking to classical lipid rafts, but not for viral replication.

Its subcellular location is the virion membrane. It localises to the host cell membrane. It is found in the host endosome membrane. Functionally, the surface protein gp120 (SU) attaches the virus to the host lymphoid cell by binding to the primary receptor CD4. This interaction induces a structural rearrangement creating a high affinity binding site for a chemokine coreceptor like CXCR4 and/or CCR5. This peculiar 2 stage receptor-interaction strategy allows gp120 to maintain the highly conserved coreceptor-binding site in a cryptic conformation, protected from neutralizing antibodies. Since CD4 also displays a binding site for the disulfide-isomerase P4HB/PDI, a P4HB/PDI-CD4-CXCR4-gp120 complex may form. In that complex, P4HB/PDI could reach and reduce gp120 disulfide bonds, causing major conformational changes in gp120. TXN, another PDI family member could also be involved in disulfide rearrangements in Env during fusion. These changes are transmitted to the transmembrane protein gp41 and are thought to activate its fusogenic potential by unmasking its fusion peptide. In terms of biological role, the surface protein gp120 is a ligand for CD209/DC-SIGN and CLEC4M/DC-SIGNR, which are respectively found on dendritic cells (DCs), and on endothelial cells of liver sinusoids and lymph node sinuses. These interactions allow capture of viral particles at mucosal surfaces by these cells and subsequent transmission to permissive cells. DCs are professional antigen presenting cells, critical for host immunity by inducing specific immune responses against a broad variety of pathogens. They act as sentinels in various tissues where they take up antigen, process it, and present it to T-cells following migration to lymphoid organs. HIV subverts the migration properties of dendritic cells to gain access to CD4+ T-cells in lymph nodes. Virus transmission to permissive T-cells occurs either in trans (without DCs infection, through viral capture and transmission), or in cis (following DCs productive infection, through the usual CD4-gp120 interaction), thereby inducing a robust infection. In trans infection, bound virions remain infectious over days and it is proposed that they are not degraded, but protected in non-lysosomal acidic organelles within the DCs close to the cell membrane thus contributing to the viral infectious potential during DCs' migration from the periphery to the lymphoid tissues. On arrival at lymphoid tissues, intact virions recycle back to DCs' cell surface allowing virus transmission to CD4+ T-cells. Virion capture also seems to lead to MHC-II-restricted viral antigen presentation, and probably to the activation of HIV-specific CD4+ cells. Its function is as follows. The transmembrane protein gp41 (TM) acts as a class I viral fusion protein. Under the current model, the protein has at least 3 conformational states: pre-fusion native state, pre-hairpin intermediate state, and post-fusion hairpin state. During fusion of viral and target intracellular membranes, the coiled coil regions (heptad repeats) assume a trimer-of-hairpins structure, positioning the fusion peptide in close proximity to the C-terminal region of the ectodomain. The formation of this structure appears to drive apposition and subsequent fusion of viral and target cell membranes. Complete fusion occurs in host cell endosomes and is dynamin-dependent, however some lipid transfer might occur at the plasma membrane. The virus undergoes clathrin-dependent internalization long before endosomal fusion, thus minimizing the surface exposure of conserved viral epitopes during fusion and reducing the efficacy of inhibitors targeting these epitopes. Membranes fusion leads to delivery of the nucleocapsid into the cytoplasm. The envelope glycoprotein gp160 precursor down-modulates cell surface CD4 antigen by interacting with it in the endoplasmic reticulum and blocking its transport to the cell surface. Functionally, the gp120-gp41 heterodimer seems to contribute to T-cell depletion during HIV-1 infection. The envelope glycoproteins expressed on the surface of infected cells induce apoptosis through an interaction with uninfected cells expressing the receptor (CD4) and the coreceptors CXCR4 or CCR5. This type of bystander killing may be obtained by at least three distinct mechanisms. First, the interaction between the 2 cells can induce cellular fusion followed by nuclear fusion within the syncytium. Syncytia are condemned to die from apoptosis. Second, the 2 interacting cells may not fuse entirely and simply exchange plasma membrane lipids, after a sort of hemifusion process, followed by rapid death. Third, it is possible that virus-infected cells, on the point of undergoing apoptosis, fuse with CD4-expressing cells, in which case apoptosis is rapidly transmitted from one cell to the other and thus occurs in a sort of contagious fashion. In terms of biological role, the gp120-gp41 heterodimer allows rapid transcytosis of the virus through CD4 negative cells such as simple epithelial monolayers of the intestinal, rectal and endocervical epithelial barriers. Both gp120 and gp41 specifically recognize glycosphingolipids galactosyl-ceramide (GalCer) or 3' sulfo-galactosyl-ceramide (GalS) present in the lipid rafts structures of epithelial cells. Binding to these alternative receptors allows the rapid transcytosis of the virus through the epithelial cells. This transcytotic vesicle-mediated transport of virions from the apical side to the basolateral side of the epithelial cells does not involve infection of the cells themselves. The protein is Envelope glycoprotein gp160 (env) of Human immunodeficiency virus type 2 subtype B (isolate D205) (HIV-2).